The primary structure comprises 743 residues: NAD(P)H-quinone oxidoreductase subunit 5, chloroplastic (743 aa).

16 helical membrane passes run 9 to 29 (WIIPFLPLPVPMLIGLGLLLF), 40 to 60 (WAFQSVLLLSIVMIFSMNLSI), 89 to 109 (IDPLTSIMSILITTVGIMVLI), 125 to 145 (FAYMSFFSTSMLGLVTSSNLI), 147 to 167 (IYIFWELVGMCSYLLIGFWFT), 185 to 205 (GDFGLLLGILGFYWITGSFEF), 219 to 239 (NEVNFLFVTLCAVLLFAGAIA), 258 to 278 (TPISALIHAATMVAAGIFLVA), 284 to 304 (FIVIPHIMNLISLIGIITVFF), 327 to 347 (LGYMMLALGMGSYRSALFHLI), 354 to 374 (ALLFLGSGSVIHSMETLVGYC), 396 to 416 (NSFLLGTLSLCGIPPLACFWS), 425 to 445 (WLYSPIFAIIAWSTAGLTAFY), 551 to 571 (LFPILILILFTLFVGFLGIPF), 607 to 627 (VFSVSIASFGIYIAFFLYKPV), and 723 to 743 (YLFFYFSYVSIFLFIYYFLNL).

Belongs to the complex I subunit 5 family. As to quaternary structure, NDH is composed of at least 16 different subunits, 5 of which are encoded in the nucleus.

It localises to the plastid. The protein localises to the chloroplast thylakoid membrane. The catalysed reaction is a plastoquinone + NADH + (n+1) H(+)(in) = a plastoquinol + NAD(+) + n H(+)(out). The enzyme catalyses a plastoquinone + NADPH + (n+1) H(+)(in) = a plastoquinol + NADP(+) + n H(+)(out). Functionally, NDH shuttles electrons from NAD(P)H:plastoquinone, via FMN and iron-sulfur (Fe-S) centers, to quinones in the photosynthetic chain and possibly in a chloroplast respiratory chain. The immediate electron acceptor for the enzyme in this species is believed to be plastoquinone. Couples the redox reaction to proton translocation, and thus conserves the redox energy in a proton gradient. The sequence is that of NAD(P)H-quinone oxidoreductase subunit 5, chloroplastic (ndhF) from Ambrosia trifida (Giant ragweed).